Consider the following 115-residue polypeptide: Aspartate 1-decarboxylase (115 aa).

Ser25 (schiff-base intermediate with substrate; via pyruvic acid) is an active-site residue. The residue at position 25 (Ser25) is a Pyruvic acid (Ser). Thr57 serves as a coordination point for substrate. Tyr58 functions as the Proton donor in the catalytic mechanism. Position 73 to 75 (73 to 75 (GAA)) interacts with substrate.

This sequence belongs to the PanD family. In terms of assembly, heterooctamer of four alpha and four beta subunits. Pyruvate is required as a cofactor. Post-translationally, is synthesized initially as an inactive proenzyme, which is activated by self-cleavage at a specific serine bond to produce a beta-subunit with a hydroxyl group at its C-terminus and an alpha-subunit with a pyruvoyl group at its N-terminus.

It localises to the cytoplasm. The enzyme catalyses L-aspartate + H(+) = beta-alanine + CO2. It functions in the pathway cofactor biosynthesis; (R)-pantothenate biosynthesis; beta-alanine from L-aspartate: step 1/1. Functionally, catalyzes the pyruvoyl-dependent decarboxylation of aspartate to produce beta-alanine. The protein is Aspartate 1-decarboxylase of Kosmotoga olearia (strain ATCC BAA-1733 / DSM 21960 / TBF 19.5.1).